A 695-amino-acid chain; its full sequence is MEGQSIELELSVMAMPELIDSTEAGHTAGVKTDSNPQAIAQDRRWTIDDSENLYRITGWGEPYFSINAAGHVTVSPQADHGGALDLYELVKGLRQRNIGLPLLLRFSDILADRINRLNAAFARGIARYRYPNTYRGVYPIKCNQHRHIVESLVRYGTPYNFGLEAGSKPELMIALAMLQPQENPEPDQQNQPLLICNGYKDREYIETALLARRLGHRPIIVVEQVAEVALAIEISSNLGIKPILGVRAKLSTQGMGRWGISTGDRAKFGLTIPEMLTAIEQLRRADMLDSLQLLHFHIGSQISSISVIKEAMTEASQIFVQLAKLGANMRYLDVGGGLGVDYDGSKTNFYASKNYNIQNYVNDVISAVQDACVAAEVPCPVLISESGRAIASHQSVLIFDVVATNDINPPLPKVKGKDHAILRNLMETWETITVDNYQEAYHDVEQFKTEAISLFNFGYLGLKERAKAEELYWACCRKILQICRQQEYVPDDLENLEVNLASIYYANMSVFQSAPDSWAIDQLFPIMPIHRLDEEPTQRGILADITCDSDGKIDQFIDLRDVKSVLELHPLIEVHQPGTPPRVEPYYLGMFLVGAYQEIMGNLHNLFGDINVVHIQMNPKGYQIEHLVRGDTIAEVLGYVQYDPEDLLENMRRYCEQAMEDKRMSLEEAQLLLENYERSLLQYTYLKPTSGIHTS.

An N6-(pyridoxal phosphate)lysine modification is found at lysine 141. 332-342 (LDVGGGLGVDY) contacts substrate.

This sequence belongs to the Orn/Lys/Arg decarboxylase class-II family. SpeA subfamily. Requires Mg(2+) as cofactor. It depends on pyridoxal 5'-phosphate as a cofactor.

It catalyses the reaction L-arginine + H(+) = agmatine + CO2. Functionally, catalyzes the biosynthesis of agmatine from arginine. The polypeptide is Biosynthetic arginine decarboxylase 1 (speA1) (Synechocystis sp. (strain ATCC 27184 / PCC 6803 / Kazusa)).